Reading from the N-terminus, the 394-residue chain is S-adenosylmethionine synthase 1 (394 aa).

Glutamate 11 lines the Mg(2+) pocket. Histidine 17 is a binding site for ATP. Residue glutamate 45 coordinates K(+). L-methionine contacts are provided by glutamate 58 and glutamine 101. Residues 169–171, 237–240, aspartate 248, 254–255, alanine 271, lysine 275, and lysine 279 contribute to the ATP site; these read DGK, SGRF, and RK. Aspartate 248 contacts L-methionine. Position 279 (lysine 279) interacts with L-methionine.

This sequence belongs to the AdoMet synthase family. As to quaternary structure, homotetramer. Mn(2+) serves as cofactor. Mg(2+) is required as a cofactor. The cofactor is Co(2+). It depends on K(+) as a cofactor.

It localises to the cytoplasm. It catalyses the reaction L-methionine + ATP + H2O = S-adenosyl-L-methionine + phosphate + diphosphate. It functions in the pathway amino-acid biosynthesis; S-adenosyl-L-methionine biosynthesis; S-adenosyl-L-methionine from L-methionine: step 1/1. In terms of biological role, catalyzes the formation of S-adenosylmethionine from methionine and ATP. The reaction comprises two steps that are both catalyzed by the same enzyme: formation of S-adenosylmethionine (AdoMet) and triphosphate, and subsequent hydrolysis of the triphosphate. The chain is S-adenosylmethionine synthase 1 (SAMS1) from Triticum monococcum (Einkorn wheat).